The primary structure comprises 256 residues: Chlorophyll a-b binding protein CP24 10A, chloroplastic (256 aa).

Transmembrane regions (helical) follow at residues 106–126 (WAMA…IPWF) and 134–154 (AIAP…MGWV).

The protein belongs to the ELIP/psbS family.

It is found in the plastid. The protein resides in the chloroplast thylakoid membrane. This chain is Chlorophyll a-b binding protein CP24 10A, chloroplastic (CAP10A), found in Solanum lycopersicum (Tomato).